The sequence spans 231 residues: DNA mismatch repair protein MutH (231 aa).

The protein belongs to the MutH family.

The protein localises to the cytoplasm. Its function is as follows. Sequence-specific endonuclease that cleaves unmethylated GATC sequences. It is involved in DNA mismatch repair. The protein is DNA mismatch repair protein MutH of Klebsiella pneumoniae subsp. pneumoniae (strain ATCC 700721 / MGH 78578).